The sequence spans 626 residues: DNA mismatch repair protein MutL (626 aa).

2 disordered regions span residues 385–413 (SGAS…PSMV) and 418–437 (LTPS…VAPD).

Belongs to the DNA mismatch repair MutL/HexB family.

In terms of biological role, this protein is involved in the repair of mismatches in DNA. It is required for dam-dependent methyl-directed DNA mismatch repair. May act as a 'molecular matchmaker', a protein that promotes the formation of a stable complex between two or more DNA-binding proteins in an ATP-dependent manner without itself being part of a final effector complex. The sequence is that of DNA mismatch repair protein MutL from Chlorobaculum parvum (strain DSM 263 / NCIMB 8327) (Chlorobium vibrioforme subsp. thiosulfatophilum).